The chain runs to 333 residues: Holliday junction branch migration complex subunit RuvB (333 aa).

The segment at 1–181 (MARILDNDLL…FGINGHMEYY (181 aa)) is large ATPase domain (RuvB-L). ATP-binding positions include Leu-20, Arg-21, Gly-62, Lys-65, Thr-66, Thr-67, 128-130 (EDY), Arg-171, Tyr-181, and Arg-218. Thr-66 lines the Mg(2+) pocket. The interval 130-148 (YYIDIMIGAGETSRSVHLD) is presensor-1 beta-hairpin. The interval 182–252 (ELPDLTEIVE…IADQALTMLD (71 aa)) is small ATPAse domain (RuvB-S). The tract at residues 255 to 333 (HEGLDYVDQK…HMGYDYTRDN (79 aa)) is head domain (RuvB-H). DNA contacts are provided by Arg-291, Arg-310, Arg-312, and Arg-315.

This sequence belongs to the RuvB family. As to quaternary structure, homohexamer. Forms an RuvA(8)-RuvB(12)-Holliday junction (HJ) complex. HJ DNA is sandwiched between 2 RuvA tetramers; dsDNA enters through RuvA and exits via RuvB. Only 4 subunits contact one DNA strand at any time. Two adjacent subunits are contacted by domain III of RuvA. An RuvB hexamer assembles on each DNA strand where it exits the tetramer. Each RuvB hexamer is contacted by two RuvA subunits (via domain III) on 2 adjacent RuvB subunits; this complex drives branch migration. In the full resolvosome a probable DNA-RuvA(4)-RuvB(12)-RuvC(2) complex forms which resolves the HJ.

It localises to the cytoplasm. It catalyses the reaction ATP + H2O = ADP + phosphate + H(+). Binding of domain III of RuvA to a single subunit of the RuvB hexamer activates the ATPase 2 subunits away and nucleotide exchange in the adjacent subunit. In terms of biological role, the RuvA-RuvB-RuvC complex processes Holliday junction (HJ) DNA during genetic recombination and DNA repair, while the RuvA-RuvB complex plays an important role in the rescue of blocked DNA replication forks via replication fork reversal (RFR). Catalyzes branch migration on Holliday junction (HJ) DNA in complex with RuvA from S.typhimurim and ATP. RuvA specifically binds to HJ cruciform DNA, conferring on it an open structure. The RuvB hexamer acts as an ATP-dependent pump, pulling dsDNA into and through the RuvAB complex. Forms 2 homohexamers on either side of HJ DNA bound by 1 or 2 RuvA tetramers; 4 subunits per hexamer contact DNA at a time. Coordinated motions by a converter formed by DNA-disengaged RuvB subunits stimulates ATP hydrolysis and nucleotide exchange. Immobilization of the converter enables RuvB to convert the ATP-contained energy into a lever motion, pulling 2 nucleotides of DNA out of the RuvA tetramer per ATP hydrolyzed, thus driving DNA branch migration. The RuvB motors rotate together with the DNA substrate, which together with the progressing nucleotide cycle forms the mechanistic basis for DNA recombination by continuous branch migration. Branch migration allows RuvC to scan DNA until it finds its consensus sequence, where it cleaves and resolves cruciform DNA. This chain is Holliday junction branch migration complex subunit RuvB, found in Streptococcus thermophilus (strain ATCC BAA-250 / LMG 18311).